The primary structure comprises 432 residues: Enolase 1 (432 aa).

Residue glutamine 163 coordinates (2R)-2-phosphoglycerate. The active-site Proton donor is glutamate 205. Positions 242, 287, and 314 each coordinate Mg(2+). (2R)-2-phosphoglycerate is bound by residues lysine 339, arginine 368, serine 369, and lysine 390. Lysine 339 (proton acceptor) is an active-site residue.

The protein belongs to the enolase family. Mg(2+) serves as cofactor.

It is found in the cytoplasm. The protein localises to the secreted. The protein resides in the cell surface. The catalysed reaction is (2R)-2-phosphoglycerate = phosphoenolpyruvate + H2O. Its pathway is carbohydrate degradation; glycolysis; pyruvate from D-glyceraldehyde 3-phosphate: step 4/5. Catalyzes the reversible conversion of 2-phosphoglycerate (2-PG) into phosphoenolpyruvate (PEP). It is essential for the degradation of carbohydrates via glycolysis. In Lactobacillus johnsonii (strain CNCM I-12250 / La1 / NCC 533), this protein is Enolase 1.